The chain runs to 1050 residues: Sucrose-phosphate synthase 4 (1050 aa).

Residues Gln-134–Thr-167 are disordered. Residue Ser-148 is modified to Phosphoserine. Residues Glu-149 to Glu-163 are compositionally biased toward basic and acidic residues. The residue at position 180 (Ser-180) is a Phosphoserine.

Belongs to the glycosyltransferase 1 family. Homodimer or homotetramer.

The catalysed reaction is beta-D-fructose 6-phosphate + UDP-alpha-D-glucose = sucrose 6(F)-phosphate + UDP + H(+). Its pathway is glycan biosynthesis; sucrose biosynthesis; sucrose from D-fructose 6-phosphate and UDP-alpha-D-glucose: step 1/2. Its activity is regulated as follows. Activity is regulated by phosphorylation and moderated by concentration of metabolites and light. Its function is as follows. Plays a role in photosynthetic sucrose synthesis by catalyzing the rate-limiting step of sucrose biosynthesis from UDP-glucose and fructose- 6-phosphate. Involved in the regulation of carbon partitioning in the leaves of plants. May regulate the synthesis of sucrose and therefore play a major role as a limiting factor in the export of photoassimilates out of the leaf. Plays a role for sucrose availability that is essential for plant growth and fiber elongation. In Arabidopsis thaliana (Mouse-ear cress), this protein is Sucrose-phosphate synthase 4.